The following is a 498-amino-acid chain: Capsanthin/capsorubin synthase, chromoplastic (498 aa).

The N-terminal 52 residues, 1 to 52 (METLLKPFPSPLLSIPTPNMYSFKHNSTFPNPTKQKDSRKFHYRNKSSTHFC), are a transit peptide targeting the chromoplast. 84 to 112 (VIIIGTGPAGLRLAEQVSKYGIKVCCVDP) is an NAD(+) binding site. An FLEET motif motif is present at residues 293–297 (FLEET).

Belongs to the lycopene cyclase family. As to quaternary structure, monomer. FAD is required as a cofactor. NADPH serves as cofactor.

It is found in the plastid. The protein resides in the chromoplast. The catalysed reaction is all-trans-violaxanthin = all-trans-capsorubin. The enzyme catalyses all-trans-antheraxanthin = all-trans-capsanthin. It catalyses the reaction all-trans-violaxanthin = (5R,6S)-5,6-epoxi-capsanthin. It carries out the reaction (5R,6S)-5,6-epoxi-capsanthin = all-trans-capsorubin. The protein operates within carotenoid biosynthesis; capsanthin biosynthesis; capsanthin from antheraxanthin: step 1/1. It functions in the pathway carotenoid biosynthesis; capsorubin biosynthesis; capsorubin from violaxanthin: step 1/1. Catalyzes the conversion of the ubiquitous 5,6-epoxycarotenoids, antheraxanthin and violaxanthin, into capsanthin and capsorubin, respectively. This chain is Capsanthin/capsorubin synthase, chromoplastic, found in Capsicum annuum (Capsicum pepper).